A 533-amino-acid polypeptide reads, in one-letter code: Thromboxane-A synthase (533 aa).

The Cytoplasmic segment spans residues 1-10 (MEALGFLKLE). A helical transmembrane segment spans residues 11–31 (VNGPMVTVALSVALLALLKWY). Topologically, residues 32–75 (STSAFSRLEKLGLRHPKPSPFIGNLMFFRQGFWESQMELRKLYG) are lumenal. The helical transmembrane segment at 76 to 96 (PLCGYYLGRRMFIVISEPDMI) threads the bilayer. Over 97-223 (KQVLVENFSN…KRFFEFCIPR (127 aa)) the chain is Cytoplasmic. A helical membrane pass occupies residues 224-244 (PILVLLLSFPSIMVPLARILP). Over 245-335 (NKNRDELNGF…LTVDEIVGQA (91 aa)) the chain is Lumenal. Residues 336-356 (FIFLIAGYEIVTNTLSFATYL) form a helical membrane-spanning segment. At 357-533 (LATNPDCQEK…NGVYIKIVSR (177 aa)) the chain is on the cytoplasmic side. A heme-binding site is contributed by cysteine 479.

The protein belongs to the cytochrome P450 family. In terms of assembly, monomer. It depends on heme as a cofactor.

The protein resides in the endoplasmic reticulum membrane. The catalysed reaction is prostaglandin H2 = thromboxane A2. It catalyses the reaction prostaglandin H2 = (12S)-hydroxy-(5Z,8E,10E)-heptadecatrienoate + malonaldehyde. The enzyme catalyses a hydroperoxyeicosatetraenoate = an oxoeicosatetraenoate + H2O. It carries out the reaction (15S)-hydroperoxy-(5Z,8Z,11Z,13E)-eicosatetraenoate = 15-oxo-(5Z,8Z,11Z,13E)-eicosatetraenoate + H2O. The catalysed reaction is (15S)-hydroperoxy-(5Z,8Z,11Z,13E)-eicosatetraenoate + AH2 = (15S)-hydroxy-(5Z,8Z,11Z,13E)-eicosatetraenoate + A + H2O. Functionally, catalyzes the conversion of prostaglandin H2 (PGH2) to thromboxane A2 (TXA2), a potent inducer of blood vessel constriction and platelet aggregation. Also cleaves PGH2 to 12-hydroxy-heptadecatrienoicacid (12-HHT) and malondialdehyde, which is known to act as a mediator of DNA damage. 12-HHT and malondialdehyde are formed stoichiometrically in the same amounts as TXA2. Additionally, displays dehydratase activity, toward (15S)-hydroperoxy-(5Z,8Z,11Z,13E)-eicosatetraenoate (15(S)-HPETE) producing 15-KETE and 15-HETE. This Macaca fascicularis (Crab-eating macaque) protein is Thromboxane-A synthase (TBXAS1).